The chain runs to 405 residues: MKKVIKKIALAYSGGLDTSIMIPWLKEHYEHAEVIAVICDLGQQEDLDAIKNKALKSGASKAYVVDVKNEFAIQYLWPLVKSGALYEDQYILGTISRPLIAQKLVEIALTEEVNAVAHGATGKGNDQVRFEYSIKALAPQLEIIAPWRTWDIKSRQEAIVYAKAHGIEVPVTPKAPYSRDHNIWYISHEGGVLEDPSQEMPDDVLLMTAPVSQTPDEEEVVVLDFKKGVPVALNGQELSPVDLLNSLNQKAGQHGIGVADIVENRLVGMKIRGIYEAPAAAVLYKAHKLLESLCLTRSTLHLKQSLQQTYANLVYEGRWFSQTKQALDAFIDVTQQHVTGCVKLKLFKGNIIPAGMHSPYSLHHPELATFEEDNVYNQKDAEGFINLFSLSAKIYSQVHQGGNYD.

11–19 (AYSGGLDTS) contributes to the ATP binding site. L-citrulline is bound at residue Tyr-90. Gly-119 lines the ATP pocket. L-aspartate contacts are provided by Thr-121, Asn-125, and Asp-126. Asn-125 is an L-citrulline binding site. Positions 129, 178, 187, 263, and 275 each coordinate L-citrulline.

It belongs to the argininosuccinate synthase family. Type 1 subfamily. As to quaternary structure, homotetramer.

The protein localises to the cytoplasm. It catalyses the reaction L-citrulline + L-aspartate + ATP = 2-(N(omega)-L-arginino)succinate + AMP + diphosphate + H(+). It participates in amino-acid biosynthesis; L-arginine biosynthesis; L-arginine from L-ornithine and carbamoyl phosphate: step 2/3. This Legionella pneumophila (strain Paris) protein is Argininosuccinate synthase.